Reading from the N-terminus, the 280-residue chain is Nucleotide-binding protein Dgeo_0723 (280 aa).

8–15 contacts ATP; that stretch reads GLSGSGKS. Residue 57–60 participates in GTP binding; the sequence is DART.

It belongs to the RapZ-like family.

Its function is as follows. Displays ATPase and GTPase activities. This chain is Nucleotide-binding protein Dgeo_0723, found in Deinococcus geothermalis (strain DSM 11300 / CIP 105573 / AG-3a).